The following is a 577-amino-acid chain: Aspartate--tRNA(Asp/Asn) ligase (577 aa).

Glutamate 171 contributes to the L-aspartate binding site. An aspartate region spans residues 195–198 (QLFK). Arginine 217 is a binding site for L-aspartate. ATP contacts are provided by residues 217–219 (RDE) and glutamine 226. Histidine 444 is a binding site for L-aspartate. Glutamate 474 is an ATP binding site. Arginine 481 contributes to the L-aspartate binding site. 526-529 (GFDR) lines the ATP pocket.

It belongs to the class-II aminoacyl-tRNA synthetase family. Type 1 subfamily. Homodimer.

Its subcellular location is the cytoplasm. The catalysed reaction is tRNA(Asx) + L-aspartate + ATP = L-aspartyl-tRNA(Asx) + AMP + diphosphate. Aspartyl-tRNA synthetase with relaxed tRNA specificity since it is able to aspartylate not only its cognate tRNA(Asp) but also tRNA(Asn). Reaction proceeds in two steps: L-aspartate is first activated by ATP to form Asp-AMP and then transferred to the acceptor end of tRNA(Asp/Asn). This is Aspartate--tRNA(Asp/Asn) ligase from Helicobacter pylori (strain P12).